The chain runs to 475 residues: Glycogen synthase (475 aa).

An ADP-alpha-D-glucose-binding site is contributed by lysine 15.

It belongs to the glycosyltransferase 1 family. Bacterial/plant glycogen synthase subfamily.

The catalysed reaction is [(1-&gt;4)-alpha-D-glucosyl](n) + ADP-alpha-D-glucose = [(1-&gt;4)-alpha-D-glucosyl](n+1) + ADP + H(+). The protein operates within glycan biosynthesis; glycogen biosynthesis. Synthesizes alpha-1,4-glucan chains using ADP-glucose. The protein is Glycogen synthase of Anaeromyxobacter dehalogenans (strain 2CP-C).